We begin with the raw amino-acid sequence, 176 residues long: Large ribosomal subunit protein uL6 (176 aa).

The protein belongs to the universal ribosomal protein uL6 family. Part of the 50S ribosomal subunit.

Its function is as follows. This protein binds to the 23S rRNA, and is important in its secondary structure. It is located near the subunit interface in the base of the L7/L12 stalk, and near the tRNA binding site of the peptidyltransferase center. The chain is Large ribosomal subunit protein uL6 from Lacticaseibacillus paracasei (strain ATCC 334 / BCRC 17002 / CCUG 31169 / CIP 107868 / KCTC 3260 / NRRL B-441) (Lactobacillus paracasei).